The primary structure comprises 140 residues: ATP synthase epsilon chain (140 aa).

Belongs to the ATPase epsilon chain family. As to quaternary structure, F-type ATPases have 2 components, CF(1) - the catalytic core - and CF(0) - the membrane proton channel. CF(1) has five subunits: alpha(3), beta(3), gamma(1), delta(1), epsilon(1). CF(0) has three main subunits: a, b and c.

Its subcellular location is the cell inner membrane. Its function is as follows. Produces ATP from ADP in the presence of a proton gradient across the membrane. The chain is ATP synthase epsilon chain from Chromobacterium violaceum (strain ATCC 12472 / DSM 30191 / JCM 1249 / CCUG 213 / NBRC 12614 / NCIMB 9131 / NCTC 9757 / MK).